Consider the following 464-residue polypeptide: GTPase Der (464 aa).

EngA-type G domains follow at residues 3–166 (ALVA…PVLE) and 177–350 (LQFA…QSAN). Residues 9-16 (GRPNVGKS), 56-60 (DTGGV), 118-121 (NKAE), 183-190 (GRPNVGKS), 230-234 (DTAGI), and 295-298 (NKWD) each bind GTP. One can recognise a KH-like domain in the interval 351–435 (SHLPTGELNR…PIALEFRTVK (85 aa)).

Belongs to the TRAFAC class TrmE-Era-EngA-EngB-Septin-like GTPase superfamily. EngA (Der) GTPase family. Associates with the 50S ribosomal subunit.

Functionally, GTPase that plays an essential role in the late steps of ribosome biogenesis. In Nitrosococcus oceani (strain ATCC 19707 / BCRC 17464 / JCM 30415 / NCIMB 11848 / C-107), this protein is GTPase Der.